Consider the following 414-residue polypeptide: Secernin-1 (414 aa).

An N-acetylalanine modification is found at Ala-2. Residue Cys-9 is part of the active site.

The protein belongs to the peptidase C69 family. Secernin subfamily.

The protein resides in the cytoplasm. Regulates exocytosis in mast cells. Increases both the extent of secretion and the sensitivity of mast cells to stimulation with calcium. This is Secernin-1 (SCRN1) from Bos taurus (Bovine).